We begin with the raw amino-acid sequence, 354 residues long: Ribosomal RNA large subunit methyltransferase M (354 aa).

S-adenosyl-L-methionine-binding positions include serine 183, 216 to 219 (SPGG), aspartate 235, aspartate 255, and aspartate 271. Lysine 300 (proton acceptor) is an active-site residue.

The protein belongs to the class I-like SAM-binding methyltransferase superfamily. RNA methyltransferase RlmE family. RlmM subfamily. In terms of assembly, monomer.

The protein resides in the cytoplasm. It catalyses the reaction cytidine(2498) in 23S rRNA + S-adenosyl-L-methionine = 2'-O-methylcytidine(2498) in 23S rRNA + S-adenosyl-L-homocysteine + H(+). Catalyzes the 2'-O-methylation at nucleotide C2498 in 23S rRNA. The polypeptide is Ribosomal RNA large subunit methyltransferase M (Pseudomonas putida (strain ATCC 700007 / DSM 6899 / JCM 31910 / BCRC 17059 / LMG 24140 / F1)).